An 809-amino-acid polypeptide reads, in one-letter code: Phenylalanine--tRNA ligase beta subunit (809 aa).

Residues 39 to 153 enclose the tRNA-binding domain; it reads APPFSQIVVG…EDTPVGADIR (115 aa). One can recognise a B5 domain in the interval 404–479; sequence PKREPVRMRV…RIYGFEQIPA (76 aa). Positions 457, 463, 466, and 467 each coordinate Mg(2+). One can recognise an FDX-ACB domain in the interval 706–808; that stretch reads PRVPAVTRDI…AGDAFGARLR (103 aa).

The protein belongs to the phenylalanyl-tRNA synthetase beta subunit family. Type 1 subfamily. Tetramer of two alpha and two beta subunits. Mg(2+) serves as cofactor.

Its subcellular location is the cytoplasm. It carries out the reaction tRNA(Phe) + L-phenylalanine + ATP = L-phenylalanyl-tRNA(Phe) + AMP + diphosphate + H(+). The sequence is that of Phenylalanine--tRNA ligase beta subunit from Ralstonia nicotianae (strain ATCC BAA-1114 / GMI1000) (Ralstonia solanacearum).